Reading from the N-terminus, the 21-residue chain is Testis ecdysiotropin peptide 1 (21 aa).

The disordered stretch occupies residues 1-21 (ISDFDEYEPLNDADNNEVLDF).

Start or boost ecdysteroid synthesis in testis of larvae and pupae. In Lymantria dispar (Gypsy moth), this protein is Testis ecdysiotropin peptide 1.